Reading from the N-terminus, the 350-residue chain is tRNA uridine(34) hydroxylase (350 aa).

Residues 146–240 form the Rhodanese domain; it reads DDPDAVFIDM…YARRAREQGL (95 aa). Catalysis depends on cysteine 200, which acts as the Cysteine persulfide intermediate. Positions 319 to 328 are enriched in basic and acidic residues; sequence RRRRAGRENG. The disordered stretch occupies residues 319–350; that stretch reads RRRRAGRENGNKIFNKSRGRLNSKLSIPDPAE.

Belongs to the TrhO family.

The catalysed reaction is uridine(34) in tRNA + AH2 + O2 = 5-hydroxyuridine(34) in tRNA + A + H2O. In terms of biological role, catalyzes oxygen-dependent 5-hydroxyuridine (ho5U) modification at position 34 in tRNAs. The polypeptide is tRNA uridine(34) hydroxylase (Salmonella agona (strain SL483)).